The following is a 370-amino-acid chain: Aminomethyltransferase (370 aa).

Belongs to the GcvT family. As to quaternary structure, the glycine cleavage system is composed of four proteins: P, T, L and H.

It catalyses the reaction N(6)-[(R)-S(8)-aminomethyldihydrolipoyl]-L-lysyl-[protein] + (6S)-5,6,7,8-tetrahydrofolate = N(6)-[(R)-dihydrolipoyl]-L-lysyl-[protein] + (6R)-5,10-methylene-5,6,7,8-tetrahydrofolate + NH4(+). Functionally, the glycine cleavage system catalyzes the degradation of glycine. In Corynebacterium aurimucosum (strain ATCC 700975 / DSM 44827 / CIP 107346 / CN-1) (Corynebacterium nigricans), this protein is Aminomethyltransferase.